Reading from the N-terminus, the 271-residue chain is Putative hydro-lyase blr2921 (271 aa).

It belongs to the D-glutamate cyclase family.

This Bradyrhizobium diazoefficiens (strain JCM 10833 / BCRC 13528 / IAM 13628 / NBRC 14792 / USDA 110) protein is Putative hydro-lyase blr2921.